The primary structure comprises 154 residues: Large ribosomal subunit protein uL13 (154 aa).

The segment at 132–154 (PHEAQQPEVLDVKSMNAKNTRSA) is disordered.

It belongs to the universal ribosomal protein uL13 family. As to quaternary structure, part of the 50S ribosomal subunit.

Functionally, this protein is one of the early assembly proteins of the 50S ribosomal subunit, although it is not seen to bind rRNA by itself. It is important during the early stages of 50S assembly. The protein is Large ribosomal subunit protein uL13 of Paracoccus denitrificans (strain Pd 1222).